Here is a 452-residue protein sequence, read N- to C-terminus: Cobyrinate a,c-diamide synthase (452 aa).

One can recognise a GATase cobBQ-type domain in the interval 248 to 441 (RVAYALDAAF…LHIHFYQNLL (194 aa)). Catalysis depends on C330, which acts as the Nucleophile.

It belongs to the CobB/CbiA family. Mg(2+) serves as cofactor.

The enzyme catalyses cob(II)yrinate + 2 L-glutamine + 2 ATP + 2 H2O = cob(II)yrinate a,c diamide + 2 L-glutamate + 2 ADP + 2 phosphate + 2 H(+). It functions in the pathway cofactor biosynthesis; adenosylcobalamin biosynthesis; cob(II)yrinate a,c-diamide from sirohydrochlorin (anaerobic route): step 10/10. In terms of biological role, catalyzes the ATP-dependent amidation of the two carboxylate groups at positions a and c of cobyrinate, using either L-glutamine or ammonia as the nitrogen source. The protein is Cobyrinate a,c-diamide synthase of Listeria monocytogenes serotype 4b (strain F2365).